Consider the following 744-residue polypeptide: 5-methyltetrahydropteroyltriglutamate--homocysteine methyltransferase (744 aa).

5-methyltetrahydropteroyltri-L-glutamate-binding positions include 17–20 and lysine 110; that span reads REVK. Residues 422–424 and glutamate 475 each bind L-homocysteine; that span reads IGS. L-methionine-binding positions include 422 to 424 and glutamate 475; that span reads IGS. Tryptophan 552 contacts 5-methyltetrahydropteroyltri-L-glutamate. Residue aspartate 590 participates in L-homocysteine binding. L-methionine is bound at residue aspartate 590. 5-methyltetrahydropteroyltri-L-glutamate is bound at residue glutamate 596. 3 residues coordinate Zn(2+): histidine 632, cysteine 634, and glutamate 656. The active-site Proton donor is the histidine 685. Residue cysteine 717 participates in Zn(2+) binding.

It belongs to the vitamin-B12 independent methionine synthase family. Requires Zn(2+) as cofactor.

The enzyme catalyses 5-methyltetrahydropteroyltri-L-glutamate + L-homocysteine = tetrahydropteroyltri-L-glutamate + L-methionine. It functions in the pathway amino-acid biosynthesis; L-methionine biosynthesis via de novo pathway; L-methionine from L-homocysteine (MetE route): step 1/1. Its function is as follows. Catalyzes the transfer of a methyl group from 5-methyltetrahydrofolate to homocysteine resulting in methionine formation. The chain is 5-methyltetrahydropteroyltriglutamate--homocysteine methyltransferase from Trichodesmium erythraeum (strain IMS101).